The primary structure comprises 507 residues: ATP synthase subunit alpha (507 aa).

169–176 (GDRQTGKT) contacts ATP.

It belongs to the ATPase alpha/beta chains family. As to quaternary structure, F-type ATPases have 2 components, CF(1) - the catalytic core - and CF(0) - the membrane proton channel. CF(1) has five subunits: alpha(3), beta(3), gamma(1), delta(1), epsilon(1). CF(0) has three main subunits: a(1), b(2) and c(9-12). The alpha and beta chains form an alternating ring which encloses part of the gamma chain. CF(1) is attached to CF(0) by a central stalk formed by the gamma and epsilon chains, while a peripheral stalk is formed by the delta and b chains. In this bacterium the a and b subunits are transcribed but do not seem to be translated, thus the ATP synthase consists of the alpha, beta, gamma, delta, epsilon and c subunits.

Its subcellular location is the cell membrane. It catalyses the reaction ATP + H2O + 4 H(+)(in) = ADP + phosphate + 5 H(+)(out). Its function is as follows. Produces ATP from ADP in the presence of a proton gradient across the membrane. The alpha chain is a regulatory subunit. This is ATP synthase subunit alpha from Moorella thermoacetica (strain ATCC 39073 / JCM 9320).